Consider the following 392-residue polypeptide: Phosphoglycerate kinase (392 aa).

Residues 21-23 (DFN), Arg36, 59-62 (HLGR), Arg113, and Arg146 contribute to the substrate site. ATP is bound by residues Lys197, Glu319, and 345–348 (GGDT).

The protein belongs to the phosphoglycerate kinase family. Monomer.

Its subcellular location is the cytoplasm. The catalysed reaction is (2R)-3-phosphoglycerate + ATP = (2R)-3-phospho-glyceroyl phosphate + ADP. It functions in the pathway carbohydrate degradation; glycolysis; pyruvate from D-glyceraldehyde 3-phosphate: step 2/5. The polypeptide is Phosphoglycerate kinase (Francisella tularensis subsp. tularensis (strain FSC 198)).